The sequence spans 300 residues: Protein YIF1B (300 aa).

Residues 1 to 46 (MNQESSFRAPPKRRVRGPNPNISTPHQLFDDTSGGPVPHGGEYPNH) are disordered. Over 1–142 (MNQESSFRAP…APRFDINAPD (142 aa)) the chain is Cytoplasmic. A helical transmembrane segment spans residues 143–163 (LYIPVMAFITYILVAGLALGT). The Extracellular portion of the chain corresponds to 164–178 (QSRFSPEILGMQASS). A helical membrane pass occupies residues 179–199 (ALAWLIVEVLAILLSLYLVTV). Residues 200 to 205 (NTDLTT) lie on the Cytoplasmic side of the membrane. A helical transmembrane segment spans residues 206-226 (VDLVAFSGYKYVGMISGVISG). Residue Leu227 is a topological domain, extracellular. A helical transmembrane segment spans residues 228–248 (LFGKTGYYVVLSWCGISVVFF). The Cytoplasmic portion of the chain corresponds to 249–278 (MIRTLRLKILSEAAAEGVLVRGARNQLRMY). Residues 279–299 (LTMAIAAVQPIFMYWLTYHLV) traverse the membrane as a helical segment. Position 300 (Arg300) is a topological domain, extracellular.

It belongs to the YIF1 family.

The protein resides in the endoplasmic reticulum membrane. It is found in the golgi apparatus membrane. It localises to the endoplasmic reticulum-Golgi intermediate compartment membrane. In terms of biological role, functions in endoplasmic reticulum to Golgi vesicle-mediated transport and regulates the proper organization of the endoplasmic reticulum and the Golgi. Plays a key role in targeting to neuronal dendrites receptors such as HTR1A. Plays also a role in primary cilium and sperm flagellum assembly probably through protein transport to these compartments. The chain is Protein YIF1B (yif1b) from Xenopus tropicalis (Western clawed frog).